The primary structure comprises 281 residues: Beta-etherase (281 aa).

Residues 11 to 87 (DLQLESGCTI…YLDEKYPDRP (77 aa)) form the GST N-terminal domain. The segment at 244 to 281 (GDPEPFVRQTGPAGAGGQALNKGPQTTKMPPRVAEKAD) is disordered.

The protein belongs to the GST superfamily.

It localises to the cell inner membrane. Able to degrade various dimeric lignin compounds. Catalyzes the unique and reductive cleavage of arylglycerol-beta-aryl ether. The polypeptide is Beta-etherase (ligE) (Sphingobium sp. (strain NBRC 103272 / SYK-6)).